A 465-amino-acid chain; its full sequence is Glutamate--tRNA ligase 1 (465 aa).

The 'HIGH' region motif lies at 8-18 (PSPTGNLHIGG). The 'KMSKS' region signature appears at 236 to 240 (KLSKR). Lys239 contacts ATP.

This sequence belongs to the class-I aminoacyl-tRNA synthetase family. Glutamate--tRNA ligase type 1 subfamily. Monomer.

The protein resides in the cytoplasm. It catalyses the reaction tRNA(Glu) + L-glutamate + ATP = L-glutamyl-tRNA(Glu) + AMP + diphosphate. Its function is as follows. Catalyzes the attachment of glutamate to tRNA(Glu) in a two-step reaction: glutamate is first activated by ATP to form Glu-AMP and then transferred to the acceptor end of tRNA(Glu). This Wolinella succinogenes (strain ATCC 29543 / DSM 1740 / CCUG 13145 / JCM 31913 / LMG 7466 / NCTC 11488 / FDC 602W) (Vibrio succinogenes) protein is Glutamate--tRNA ligase 1.